Here is a 515-residue protein sequence, read N- to C-terminus: ATP synthase subunit alpha (515 aa).

171-178 is a binding site for ATP; it reads GDRQTGKT.

The protein belongs to the ATPase alpha/beta chains family. In terms of assembly, F-type ATPases have 2 components, CF(1) - the catalytic core - and CF(0) - the membrane proton channel. CF(1) has five subunits: alpha(3), beta(3), gamma(1), delta(1), epsilon(1). CF(0) has three main subunits: a(1), b(2) and c(9-12). The alpha and beta chains form an alternating ring which encloses part of the gamma chain. CF(1) is attached to CF(0) by a central stalk formed by the gamma and epsilon chains, while a peripheral stalk is formed by the delta and b chains.

It localises to the cell inner membrane. The catalysed reaction is ATP + H2O + 4 H(+)(in) = ADP + phosphate + 5 H(+)(out). Produces ATP from ADP in the presence of a proton gradient across the membrane. The alpha chain is a regulatory subunit. This Xanthomonas campestris pv. campestris (strain 8004) protein is ATP synthase subunit alpha.